Reading from the N-terminus, the 162-residue chain is Phenazine biosynthesis protein PhzA2 (162 aa).

This sequence belongs to the PhzA/PhzB family.

It functions in the pathway antibiotic biosynthesis; phenazine biosynthesis. In terms of biological role, involved in the biosynthesis of the antibiotic phenazine, a nitrogen-containing heterocyclic molecule having important roles in virulence, competition and biological control. PhzA2 (operon phzA2B2C2E2F2G2) has a role in the biosynthesis of the phenazine during both planktonic growth and biofilm development, and in host infection during biofilm development. In Pseudomonas aeruginosa (strain ATCC 15692 / DSM 22644 / CIP 104116 / JCM 14847 / LMG 12228 / 1C / PRS 101 / PAO1), this protein is Phenazine biosynthesis protein PhzA2.